The chain runs to 160 residues: RNA-binding protein 3 (160 aa).

The RRM domain maps to 6–84 (GKLFVGGLNF…RQIRVDHAGK (79 aa)). Residue arginine 47 is modified to Omega-N-methylarginine. The interval 81–116 (HAGKSARGSRGGAFGSYERGRGYPRGGGDQGYGSGR) is disordered. Over residues 103–114 (YPRGGGDQGYGS) the composition is skewed to gly residues. Position 105 is an asymmetric dimethylarginine; alternate (arginine 105). A Dimethylated arginine; alternate modification is found at arginine 105. The residue at position 105 (arginine 105) is an Omega-N-methylarginine; alternate. 2 positions are modified to omega-N-methylarginine: arginine 120 and arginine 134. The disordered stretch occupies residues 135-160 (SRDYGGRSQGGYDRYSGGNYRDNYDN). Serine 150 is modified (phosphoserine). Position 158 is a phosphotyrosine (tyrosine 158).

As to quaternary structure, interacts with RPL4. Associates with the 60S ribosomal subunits.

Its subcellular location is the nucleus. It is found in the cytoplasm. The protein localises to the cell projection. The protein resides in the dendrite. Its function is as follows. Cold-inducible mRNA binding protein that enhances global protein synthesis at both physiological and mild hypothermic temperatures. Reduces the relative abundance of microRNAs, when overexpressed. Enhances phosphorylation of translation initiation factors and active polysome formation. This chain is RNA-binding protein 3, found in Capra hircus (Goat).